A 418-amino-acid polypeptide reads, in one-letter code: Phosphoglycerate kinase (418 aa).

(2R)-3-phosphoglycerate is bound by residues Val-23, Asp-24, Phe-25, Asn-26, Gln-39, Arg-40, Ser-63, His-64, Gly-66, Arg-67, Leu-122, Arg-123, His-170, and Arg-171. Gly-214 is an ADP binding site. CDP is bound at residue Gly-214. AMP contacts are provided by Ala-215 and Lys-216. Residue Ala-215 participates in ATP binding. Ala-215 is a binding site for Mg(2+). Asp-219 contacts CDP. Asp-219 is a Mg(2+) binding site. AMP is bound at residue Lys-220. Lys-220 lines the ATP pocket. Gly-238 is an ADP binding site. Gly-238 provides a ligand contact to CDP. The AMP site is built by Gly-239 and Gly-313. The ATP site is built by Gly-239 and Gly-313. Residues Gly-338, Ala-340, and Phe-343 each contribute to the CDP site. Phe-343 is a binding site for ADP. Glu-344 is a binding site for AMP. Positions 344, 375, and 376 each coordinate ATP. Asp-375 is a binding site for Mg(2+).

The protein belongs to the phosphoglycerate kinase family. In terms of assembly, monomer. The cofactor is Mg(2+).

The protein resides in the cytoplasm. It localises to the mitochondrion. The catalysed reaction is (2R)-3-phosphoglycerate + ATP = (2R)-3-phospho-glyceroyl phosphate + ADP. It participates in carbohydrate degradation; glycolysis; pyruvate from D-glyceraldehyde 3-phosphate: step 2/5. Its function is as follows. Catalyzes one of the two ATP producing reactions in the glycolytic pathway via the reversible conversion of 1,3-diphosphoglycerate to 3-phosphoglycerate. Both L- and D- forms of purine and pyrimidine nucleotides can be used as substrates, but the activity is much lower on pyrimidines. Negatively regulates the biosynthesis of acetyl-CoA from pyruvate in the mitochondrion. The sequence is that of Phosphoglycerate kinase (pgk-1) from Neurospora crassa (strain ATCC 24698 / 74-OR23-1A / CBS 708.71 / DSM 1257 / FGSC 987).